The following is a 228-amino-acid chain: Protein GlxC (228 aa).

The protein belongs to the FwdC/FmdC family.

The sequence is that of Protein GlxC (glxC) from Rhizobium meliloti (strain 1021) (Ensifer meliloti).